We begin with the raw amino-acid sequence, 333 residues long: Holliday junction branch migration complex subunit RuvB (333 aa).

The interval 1–182 (MDERLLSGES…FGVLSRLEYY (182 aa)) is large ATPase domain (RuvB-L). Residues L21, R22, G63, K66, T67, T68, 129–131 (EDF), R172, Y182, and R219 each bind ATP. T67 contributes to the Mg(2+) binding site. Positions 183–253 (TVDQLSAIVE…ITQMALELLQ (71 aa)) are small ATPAse domain (RuvB-S). The interval 256–333 (KLGLDHIDHK…EHFGMEMPKV (78 aa)) is head domain (RuvB-H). Residues R311 and R316 each contribute to the DNA site.

Belongs to the RuvB family. In terms of assembly, homohexamer. Forms an RuvA(8)-RuvB(12)-Holliday junction (HJ) complex. HJ DNA is sandwiched between 2 RuvA tetramers; dsDNA enters through RuvA and exits via RuvB. An RuvB hexamer assembles on each DNA strand where it exits the tetramer. Each RuvB hexamer is contacted by two RuvA subunits (via domain III) on 2 adjacent RuvB subunits; this complex drives branch migration. In the full resolvosome a probable DNA-RuvA(4)-RuvB(12)-RuvC(2) complex forms which resolves the HJ.

It localises to the cytoplasm. The enzyme catalyses ATP + H2O = ADP + phosphate + H(+). Functionally, the RuvA-RuvB-RuvC complex processes Holliday junction (HJ) DNA during genetic recombination and DNA repair, while the RuvA-RuvB complex plays an important role in the rescue of blocked DNA replication forks via replication fork reversal (RFR). RuvA specifically binds to HJ cruciform DNA, conferring on it an open structure. The RuvB hexamer acts as an ATP-dependent pump, pulling dsDNA into and through the RuvAB complex. RuvB forms 2 homohexamers on either side of HJ DNA bound by 1 or 2 RuvA tetramers; 4 subunits per hexamer contact DNA at a time. Coordinated motions by a converter formed by DNA-disengaged RuvB subunits stimulates ATP hydrolysis and nucleotide exchange. Immobilization of the converter enables RuvB to convert the ATP-contained energy into a lever motion, pulling 2 nucleotides of DNA out of the RuvA tetramer per ATP hydrolyzed, thus driving DNA branch migration. The RuvB motors rotate together with the DNA substrate, which together with the progressing nucleotide cycle form the mechanistic basis for DNA recombination by continuous HJ branch migration. Branch migration allows RuvC to scan DNA until it finds its consensus sequence, where it cleaves and resolves cruciform DNA. This is Holliday junction branch migration complex subunit RuvB from Bacillus anthracis (strain A0248).